Reading from the N-terminus, the 342-residue chain is Isopentenyl-diphosphate delta-isomerase (342 aa).

Residue 11-12 (RK) coordinates substrate. FMN-binding positions include S68, 69–71 (SMT), S99, and N128. 99 to 101 (SQR) provides a ligand contact to substrate. Residue Q162 coordinates substrate. E163 is a Mg(2+) binding site. Residues K194, S219, T224, 275–277 (GVR), and 296–297 (AK) each bind FMN.

It belongs to the IPP isomerase type 2 family. In terms of assembly, homooctamer. Dimer of tetramers. FMN serves as cofactor. The cofactor is NADPH. Requires Mg(2+) as cofactor.

Its subcellular location is the cytoplasm. It carries out the reaction isopentenyl diphosphate = dimethylallyl diphosphate. Its function is as follows. Involved in the biosynthesis of isoprenoids. Catalyzes the 1,3-allylic rearrangement of the homoallylic substrate isopentenyl (IPP) to its allylic isomer, dimethylallyl diphosphate (DMAPP). The chain is Isopentenyl-diphosphate delta-isomerase from Legionella pneumophila (strain Paris).